The chain runs to 108 residues: UPF0060 membrane protein RER_49640 (108 aa).

4 helical membrane-spanning segments follow: residues 8 to 28, 33 to 53, 62 to 82, and 87 to 107; these read LLFVLAALLEIGGAWLVWQGI, GWIWVGLGVISLGLYGLVATM, ILAAYGGIFVAGSLLWAVVMD, and DRFDIAGALICLVGVGVIMYA.

Belongs to the UPF0060 family.

Its subcellular location is the cell membrane. This chain is UPF0060 membrane protein RER_49640, found in Rhodococcus erythropolis (strain PR4 / NBRC 100887).